We begin with the raw amino-acid sequence, 763 residues long: Amine oxidase [copper-containing] 3 (763 aa).

The Cytoplasmic portion of the chain corresponds to 2 to 6 (TQKTT). The helical; Signal-anchor for type II membrane protein transmembrane segment at 7–27 (LVLLALAVITIFALVCVLLAG) threads the bilayer. Residues 28–763 (RSGDGGRLSQ…AFSHGGFTYK (736 aa)) are Extracellular-facing. Asn137 carries an N-linked (GlcNAc...) asparagine glycan. Residues Cys198 and Cys199 are joined by a disulfide bond. Asn232 and Asn294 each carry an N-linked (GlcNAc...) asparagine glycan. Asp386 serves as the catalytic Proton acceptor. A disulfide bond links Cys404 and Cys430. The active-site Schiff-base intermediate with substrate; via topaquinone is the Tyr471. At Tyr471 the chain carries 2',4',5'-topaquinone. 2 residues coordinate Cu(2+): His520 and His522. Residues Asp529, Leu530, Asp531, and Glu572 each coordinate Ca(2+). Residues Asn581 and Asn592 are each glycosylated (N-linked (GlcNAc...) asparagine). Ca(2+) is bound by residues Glu641 and Phe663. Asn666 carries N-linked (GlcNAc...) asparagine glycosylation. Ca(2+)-binding residues include Glu667, Asp673, and Leu674. His684 is a Cu(2+) binding site. Cys734 and Cys741 are disulfide-bonded.

This sequence belongs to the copper/topaquinone oxidase family. In terms of assembly, homodimer; disulfide-linked. Probably forms heterodimers with AOC2. Requires Cu(2+) as cofactor. Ca(2+) serves as cofactor. The cofactor is L-topaquinone. Topaquinone (TPQ) is generated by copper-dependent autoxidation of a specific tyrosyl residue. In terms of processing, N- and O-glycosylated. As to expression, highly expressed in adipocytes, aorta and lung. Expressed at lower levels in heart, kidney, large intestine, liver, small intestine and stomach.

The protein resides in the cell membrane. The enzyme catalyses methylamine + O2 + H2O = formaldehyde + H2O2 + NH4(+). It carries out the reaction benzylamine + O2 + H2O = benzaldehyde + H2O2 + NH4(+). It catalyses the reaction 2-phenylethylamine + O2 + H2O = 2-phenylacetaldehyde + H2O2 + NH4(+). Functionally, catalyzes the oxidative deamination of primary amines to the corresponding aldehydes with the concomitant production of hydrogen peroxide and ammonia. Has a preference for the primary monoamines methylamine and benzylamine. Could also act on 2-phenylethylamine but much less efficiently. At endothelial cells surface can also function as a cell adhesion protein that participates in lymphocyte extravasation and recirculation by mediating the binding of lymphocytes to peripheral lymph node vascular endothelial cells in an L-selectin-independent fashion. The sequence is that of Amine oxidase [copper-containing] 3 from Rattus norvegicus (Rat).